Consider the following 265-residue polypeptide: Mlc titration factor A (265 aa).

Zn(2+) is bound by residues His-111, His-148, His-152, and Glu-211.

It belongs to the MtfA family. In terms of assembly, interacts with Mlc. Zn(2+) is required as a cofactor.

The protein resides in the cytoplasm. Involved in the modulation of the activity of the glucose-phosphotransferase system (glucose-PTS). Interacts with the transcriptional repressor Mlc, preventing its interaction with DNA and leading to the modulation of expression of genes regulated by Mlc, including ptsG, which encodes the PTS system glucose-specific EIICB component. In terms of biological role, shows zinc-dependent metallopeptidase activity. The protein is Mlc titration factor A of Escherichia coli (strain UTI89 / UPEC).